Here is a 229-residue protein sequence, read N- to C-terminus: 23 kDa piroplasm membrane protein (229 aa).

A signal peptide spans 1 to 19 (MNKYFKVFFFVLLTHALKS). Over 20-203 (ALIFGQATLQ…EKEDTNKKKY (184 aa)) the chain is Extracellular. A helical membrane pass occupies residues 204–224 (VLMVVVVVVFVVVASLVVFLV). Topologically, residues 225–229 (KFCLK) are cytoplasmic.

Its subcellular location is the membrane. This chain is 23 kDa piroplasm membrane protein, found in Theileria parva (East coast fever infection agent).